The sequence spans 217 residues: Uracil-DNA glycosylase (217 aa).

Aspartate 62 serves as the catalytic Proton acceptor.

Belongs to the uracil-DNA glycosylase (UDG) superfamily. UNG family.

The protein resides in the cytoplasm. It catalyses the reaction Hydrolyzes single-stranded DNA or mismatched double-stranded DNA and polynucleotides, releasing free uracil.. Functionally, excises uracil residues from the DNA which can arise as a result of misincorporation of dUMP residues by DNA polymerase or due to deamination of cytosine. This chain is Uracil-DNA glycosylase, found in Streptococcus equi subsp. zooepidemicus (strain MGCS10565).